A 150-amino-acid polypeptide reads, in one-letter code: D-aminoacyl-tRNA deacylase (150 aa).

Positions 133–134 match the Gly-cisPro motif, important for rejection of L-amino acids motif; sequence GP.

Belongs to the DTD family. As to quaternary structure, homodimer.

The protein localises to the cytoplasm. It catalyses the reaction glycyl-tRNA(Ala) + H2O = tRNA(Ala) + glycine + H(+). The catalysed reaction is a D-aminoacyl-tRNA + H2O = a tRNA + a D-alpha-amino acid + H(+). In terms of biological role, an aminoacyl-tRNA editing enzyme that deacylates mischarged D-aminoacyl-tRNAs. Also deacylates mischarged glycyl-tRNA(Ala), protecting cells against glycine mischarging by AlaRS. Acts via tRNA-based rather than protein-based catalysis; rejects L-amino acids rather than detecting D-amino acids in the active site. By recycling D-aminoacyl-tRNA to D-amino acids and free tRNA molecules, this enzyme counteracts the toxicity associated with the formation of D-aminoacyl-tRNA entities in vivo and helps enforce protein L-homochirality. The polypeptide is D-aminoacyl-tRNA deacylase (Micrococcus luteus (strain ATCC 4698 / DSM 20030 / JCM 1464 / CCM 169 / CCUG 5858 / IAM 1056 / NBRC 3333 / NCIMB 9278 / NCTC 2665 / VKM Ac-2230) (Micrococcus lysodeikticus)).